A 466-amino-acid polypeptide reads, in one-letter code: Asparagine--tRNA ligase (466 aa).

Belongs to the class-II aminoacyl-tRNA synthetase family. In terms of assembly, homodimer.

The protein localises to the cytoplasm. The enzyme catalyses tRNA(Asn) + L-asparagine + ATP = L-asparaginyl-tRNA(Asn) + AMP + diphosphate + H(+). In Shewanella halifaxensis (strain HAW-EB4), this protein is Asparagine--tRNA ligase.